The primary structure comprises 299 residues: Ciliary microtubule inner protein 2B (299 aa).

It belongs to the CIMIP2 family. As to expression, expressed in airway epithelial cells.

It localises to the cytoplasm. The protein resides in the cytoskeleton. It is found in the cilium axoneme. Functionally, microtubule inner protein (MIP) part of the dynein-decorated doublet microtubules (DMTs) in cilia axoneme, which is required for motile cilia beating. The sequence is that of Ciliary microtubule inner protein 2B (cimip2b) from Danio rerio (Zebrafish).